The sequence spans 404 residues: Cysteine desulfurase IscS (404 aa).

Residues 75-76 (AT), asparagine 155, glutamine 183, and 203-205 (SGH) each bind pyridoxal 5'-phosphate. Lysine 206 carries the N6-(pyridoxal phosphate)lysine modification. Residue threonine 243 coordinates pyridoxal 5'-phosphate. Cysteine 328 functions as the Cysteine persulfide intermediate in the catalytic mechanism. Residue cysteine 328 coordinates [2Fe-2S] cluster.

Belongs to the class-V pyridoxal-phosphate-dependent aminotransferase family. NifS/IscS subfamily. In terms of assembly, homodimer. Forms a heterotetramer with IscU, interacts with other sulfur acceptors. It depends on pyridoxal 5'-phosphate as a cofactor.

It is found in the cytoplasm. It carries out the reaction (sulfur carrier)-H + L-cysteine = (sulfur carrier)-SH + L-alanine. It functions in the pathway cofactor biosynthesis; iron-sulfur cluster biosynthesis. Functionally, master enzyme that delivers sulfur to a number of partners involved in Fe-S cluster assembly, tRNA modification or cofactor biosynthesis. Catalyzes the removal of elemental sulfur atoms from cysteine to produce alanine. Functions as a sulfur delivery protein for Fe-S cluster synthesis onto IscU, an Fe-S scaffold assembly protein, as well as other S acceptor proteins. The protein is Cysteine desulfurase IscS of Klebsiella pneumoniae (strain 342).